We begin with the raw amino-acid sequence, 505 residues long: Glutamyl-tRNA(Gln) amidotransferase subunit A, mitochondrial (505 aa).

Catalysis depends on charge relay system residues Lys-76 and Ser-158. The active-site Acyl-ester intermediate is the Ser-182.

Belongs to the amidase family. GatA subfamily. In terms of assembly, subunit of the heterotrimeric GatCAB amidotransferase (AdT) complex, composed of A, B and C subunits.

The protein resides in the mitochondrion. It carries out the reaction L-glutamyl-tRNA(Gln) + L-glutamine + ATP + H2O = L-glutaminyl-tRNA(Gln) + L-glutamate + ADP + phosphate + H(+). Functionally, allows the formation of correctly charged Gln-tRNA(Gln) through the transamidation of misacylated Glu-tRNA(Gln) in the mitochondria. The reaction takes place in the presence of glutamine and ATP through an activated gamma-phospho-Glu-tRNA(Gln). The protein is Glutamyl-tRNA(Gln) amidotransferase subunit A, mitochondrial of Ixodes scapularis (Black-legged tick).